Consider the following 469-residue polypeptide: SHC-transforming protein 1 (469 aa).

The interval 1–26 (MNKLSGGGGRRTRVEGGQLGGEEWTR) is disordered. Residue S29 is modified to Phosphoserine. At K44 the chain carries N6-acetyllysine. One can recognise a PID domain in the interval 46–229 (MGPGVSYLVR…AGFDGSAWDE (184 aa)). Residues 230 to 373 (EEEELPDHQY…SMAEQLQGES (144 aa)) form a CH1 region. Residues Y239, Y240, and Y313 each carry the phosphotyrosine modification. A disordered region spans residues 322 to 344 (ARQAGGGAGPPNPSVNGSAPRDL). At S339 the chain carries Phosphoserine. Positions 374-465 (WFHGKLSRRE…GSELCLQQPV (92 aa)) constitute an SH2 domain.

As to quaternary structure, interacts with CPNE3; this interaction may mediate the binding of CPNE3 with ERBB2. Interacts with the NPXY motif of tyrosine-phosphorylated IGF1R and INSR in vitro via the PID domain. Once activated, binds to GRB2. Interacts with tyrosine-phosphorylated CD3T and DDR2. Interacts with the N-terminal region of APS. Interacts with phosphorylated LRP1 and IRS4. Interacts with INPP5D/SHIP1 and INPPL1/SHIP2. Interacts with ALK, GAB2, GRB7 and KIT. Interacts with PTPN6/SHP (tyrosine phosphorylated). Identified in a complex containing FGFR4, NCAM1, CDH2, PLCG1, FRS2A, SRC, SHC1, GAP43 and CTTN. Interacts with EPHB1 and GRB2; activates the MAPK/ERK cascade to regulate cell migration. Interacts with PDGFRB (tyrosine-phosphorylated). Interacts with ERBB4. Interacts with TEK/TIE2 (tyrosine-phosphorylated). Interacts with PTK2/FAK1. Interacts with FLT4 (tyrosine-phosphorylated). Interacts with the Trk receptors NTRK1, NTRK2 and NTRK3; in a phosphotyrosine-dependent manner. Interacts with CEACAM1; this interaction is CEACAM1-phosphorylation-dependent and mediates interaction with EGFR or INSR resulting in decrease coupling of SHC1 to the MAPK3/ERK1-MAPK1/ERK2 pathway. Interacts (via PID domain) with PEAK1 (when phosphorylated). Found in a complex with PPP1CA, PPP1CC, SHC1 and PEAK1. In terms of processing, phosphorylated by activated epidermal growth factor receptor. Phosphorylated in response to KIT signaling. Tyrosine phosphorylated in response to FLT3 signaling and by ligand-activated ALK. Tyrosine phosphorylated by TEK/TIE2. Tyrosine phosphorylated by ligand-activated PDGFRB. May be tyrosine phosphorylated by activated PTK2/FAK1. Dephosphorylation by PTPN2 may regulate interaction with GRB2. Phosphorylated in response to FLT4 signaling. Tyrosine phosphorylated by activated PTK2B/PYK2.

It localises to the cytoplasm. Its subcellular location is the cell junction. The protein localises to the focal adhesion. Functionally, signaling adapter that couples activated growth factor receptors to signaling pathways. Participates in a signaling cascade initiated by activated KIT and KITLG/SCF. Participates in signaling downstream of the angiopoietin receptor TEK/TIE2, and plays a role in the regulation of endothelial cell migration and sprouting angiogenesis. The chain is SHC-transforming protein 1 (Shc1) from Rattus norvegicus (Rat).